The sequence spans 432 residues: Adenylosuccinate synthetase (432 aa).

GTP is bound by residues 13–19 and 41–43; these read GDEGKGK and GHT. The active-site Proton acceptor is the aspartate 14. Mg(2+) is bound by residues aspartate 14 and glycine 41. Residues 14 to 17, 39 to 42, threonine 130, arginine 144, glutamine 225, threonine 240, and arginine 304 contribute to the IMP site; these read DEGK and NAGH. The active-site Proton donor is the histidine 42. Residue 300-306 participates in substrate binding; it reads AVTGRPR. GTP contacts are provided by residues arginine 306, 332–334, and 415–417; these read KLD and STG.

The protein belongs to the adenylosuccinate synthetase family. Homodimer. Mg(2+) serves as cofactor.

Its subcellular location is the cytoplasm. It catalyses the reaction IMP + L-aspartate + GTP = N(6)-(1,2-dicarboxyethyl)-AMP + GDP + phosphate + 2 H(+). It functions in the pathway purine metabolism; AMP biosynthesis via de novo pathway; AMP from IMP: step 1/2. In terms of biological role, plays an important role in the de novo pathway of purine nucleotide biosynthesis. Catalyzes the first committed step in the biosynthesis of AMP from IMP. This is Adenylosuccinate synthetase from Mannheimia succiniciproducens (strain KCTC 0769BP / MBEL55E).